We begin with the raw amino-acid sequence, 748 residues long: Proton-associated sugar transporter A (748 aa).

Helical transmembrane passes span 93–113, 123–143, 155–175, 191–211, 233–253, and 268–288; these read ILFG…PVLL, SLVW…LGAW, RPFI…LLNG, WGLL…DSAD, IHAL…GIHW, and VIYL…LVSI. Residues 294–339 are disordered; sequence RPPSEKRAAMKSPSLPLPPSPPVLPEEGPGDSLPSHTATNFSSPIS. The span at 308-317 shows a compositional bias: pro residues; sequence LPLPPSPPVL. T497 carries the post-translational modification Phosphothreonine. The next 6 helical transmembrane spans lie at 533-553, 573-593, 600-620, 627-647, 685-705, and 708-728; these read GWLS…EVVF, VTMG…YSAI, FLSV…GTGL, LYVV…LCTL, FLAQ…VGSA, and VMYF…LFVI.

It belongs to the glycoside-pentoside-hexuronide (GPH) cation symporter transporter (TC 2.A.2) family. In terms of tissue distribution, expressed in adult heart, brain, muscle and kidney, with very strong expression in brain. Also expressed in fetal brain, kidney and lung.

The protein localises to the membrane. It carries out the reaction D-galactose(in) + H(+)(in) = D-galactose(out) + H(+)(out). The enzyme catalyses D-glucose(out) + H(+)(out) = D-glucose(in) + H(+)(in). Its function is as follows. Proton-associated glucose transporter in the brain. The sequence is that of Proton-associated sugar transporter A from Homo sapiens (Human).